We begin with the raw amino-acid sequence, 360 residues long: MSSFSFESSARLPLNPRFKQILHATVKSYIDTAEPVGSKMLTQQYNFGLSSATIRNAMAVLESWGLLFQPHTSAGRIPSDSGYRVYVDELISPPTELIQQMRAALAENLGERQDLESLLQGATRLLATLSGCVALITAPQSVFVSVRHLQIVHIGEGRALVIVVTDALQTRSFLLDLPQPEMAEQLETLNNFLNLQLQNRRLDDLNAAAVEAMGGEFHWYTDFLRGLIALLQRVLQPPTGQLYVSGVGEILKQPEFAEPERIQAIVQLLEVERERLGPLISPTQRHSRQIVVRIGAENPLGPMQFCSLVSSTYYLNEVPVGSVGVLGPTRLPYDRAIASVQAASDHLCQVMQAEDEPHRW.

The protein belongs to the HrcA family.

Negative regulator of class I heat shock genes (grpE-dnaK-dnaJ and groELS operons). Prevents heat-shock induction of these operons. The sequence is that of Heat-inducible transcription repressor HrcA from Gloeobacter violaceus (strain ATCC 29082 / PCC 7421).